Consider the following 247-residue polypeptide: MFKAIVSADTLGAALDSVSVLVDECKVRLDEEGLTIRAVDPANVGMVDLELSASAFESYETDGGVIGVNLDRLEDIVGMADSGQLVHLDLDEETRKLHISLDGLEYTLALIDPDSIRQEPDLPDLDLSSEIVIEGADIDRAVTAADMVSDHIALGVDPDAEEFYVDAEGDTDDVHLELDREDLIDLTPGEARSLFSLDYLKDMNKAIPKDAEVTMELGEEFPVKMHFDFAEGDGHVTYMLAPRIQSD.

It belongs to the PCNA family. As to quaternary structure, homotrimer. The subunits circularize to form a toroid; DNA passes through its center. Replication factor C (RFC) is required to load the toroid on the DNA.

Sliding clamp subunit that acts as a moving platform for DNA processing. Responsible for tethering the catalytic subunit of DNA polymerase and other proteins to DNA during high-speed replication. The polypeptide is DNA polymerase sliding clamp (Natronomonas pharaonis (strain ATCC 35678 / DSM 2160 / CIP 103997 / JCM 8858 / NBRC 14720 / NCIMB 2260 / Gabara) (Halobacterium pharaonis)).